A 747-amino-acid chain; its full sequence is Beta-glucosidase BoGH3A (747 aa).

The first 26 residues, 1 to 26, serve as a signal peptide directing secretion; it reads MIIGIMKTFLLTICFLSVQTGMVAIA. D273 is a catalytic residue.

Belongs to the glycosyl hydrolase 3 family.

It localises to the periplasm. It carries out the reaction Hydrolysis of terminal, non-reducing beta-D-glucosyl residues with release of beta-D-glucose.. The protein operates within glucan metabolism; xyloglucan degradation. In terms of biological role, catalyzes the hydrolysis of terminal, non-reducing beta-D-glucosyl residues with release of beta-D-glucose in xyloglucan degradation, leading to remove the backbone 'G' units. The chain is Beta-glucosidase BoGH3A from Bacteroides ovatus (strain ATCC 8483 / DSM 1896 / JCM 5824 / BCRC 10623 / CCUG 4943 / NCTC 11153).